A 607-amino-acid polypeptide reads, in one-letter code: Fatty acid amide hydrolase (607 aa).

Residues Lys205 and Ser281 each act as charge relay system in the active site. Position 302 to 305 (302 to 305 (GGGS)) interacts with substrate. The Acyl-ester intermediate role is filled by Ser305.

Belongs to the amidase family. Forms homodimers. As to expression, expressed in roots, leaves and flowers. Expressed in seedlings, flowers, roots, siliques, seeds and leaves.

The protein resides in the endoplasmic reticulum membrane. It is found in the cell membrane. The catalysed reaction is N-(5Z,8Z,11Z,14Z-eicosatetraenoyl)-ethanolamine + H2O = ethanolamine + (5Z,8Z,11Z,14Z)-eicosatetraenoate. It carries out the reaction N-(9Z,12Z-octadecadienoyl)-ethanolamine + H2O = ethanolamine + (9Z,12Z)-octadecadienoate. The enzyme catalyses N-hexadecanoylethanolamine + H2O = ethanolamine + hexadecanoate. It catalyses the reaction N-tetradecanoylethanolamine + H2O = tetradecanoate + ethanolamine. The catalysed reaction is N-dodecanoylethanolamine + H2O = dodecanoate + ethanolamine. Inhibited by methyl arachidonyl fluorophosphonate (MAFP). Functionally, catalyzes the hydrolysis of bioactive endogenous fatty acid amides to their corresponding acids. The hydrolysis of endogenous amidated lipids terminates their participation as lipid mediators in various signaling systems. Converts a wide range of N-acylethanolamines (NAEs) to their corresponding free fatty acids and ethanolamine. Can use oleamide as substrate, but not indole-3-acetamide, 1-naphtalene-acetamide, nicotinic acid amide or L-asparagine. Can use 2-arachidonylglycerol as substrate. Participates in the regulation of plant growth. Hydrolyzes N-dodecanoylethanolamine, which is has a growth inhibitory effect on seedling growth. Involved in plant defense signaling. Involved in abscisic acid (ABA) signaling through mechanisms that are independent of the catalytic activity. Involved in the regulation of flowering time. Catalyzes the hydrolysis of N-acyl L-homoserine lactones (AHLs), which are a class of signaling molecules produced by bacteria for quorum sensing. Accumulation of L-homoserine appears to encourage plant growth at low concentrations by stimulating transpiration, but higher concentrations inhibit growth by stimulating ethylene production. The sequence is that of Fatty acid amide hydrolase from Arabidopsis thaliana (Mouse-ear cress).